A 299-amino-acid chain; its full sequence is Glycine--tRNA ligase alpha subunit (299 aa).

This sequence belongs to the class-II aminoacyl-tRNA synthetase family. As to quaternary structure, tetramer of two alpha and two beta subunits.

Its subcellular location is the cytoplasm. The catalysed reaction is tRNA(Gly) + glycine + ATP = glycyl-tRNA(Gly) + AMP + diphosphate. The chain is Glycine--tRNA ligase alpha subunit from Dictyoglomus turgidum (strain DSM 6724 / Z-1310).